The sequence spans 485 residues: PTS system arbutin-, cellobiose-, and salicin-specific EIIBC component (485 aa).

The PTS EIIB type-1 domain occupies 1–88 (MAKNYAALAR…VSLLPGDMQP (88 aa)). Cysteine 28 functions as the Phosphocysteine intermediate; for EIIB activity in the catalytic mechanism. Transmembrane regions (helical) follow at residues 102–122 (IGAGILDALIGTMSPLIPAII), 147–167 (LTILNVIGDGAFFFLPLMVAA), 177–197 (MSLAIAIAGVLVHPSFIELMA), 207–227 (FALIPVTAVKYTYTVIPALVM), 254–274 (LIVLIAAPLAILLIGPIGIWI), 285–305 (IHGYLGWLSVAIMGALWPLLV), 330–350 (VMPSEIGANLSLGGSSLAVAW), 363–383 (AAAASAIMAGISEPALYGVAI), 389–409 (LIASLISGFICGAVAGMAGLA), and 433–453 (IVWVFAVMALAVVLSFILTLL). In terms of domain architecture, PTS EIIC type-1 spans 108–470 (DALIGTMSPL…VEEAAAQARK (363 aa)).

The protein resides in the cell inner membrane. The phosphoenolpyruvate-dependent sugar phosphotransferase system (sugar PTS), a major carbohydrate active -transport system, catalyzes the phosphorylation of incoming sugar substrates concomitantly with their translocation across the cell membrane. This system is involved in arbutin, cellobiose, and salicin transport. The sequence is that of PTS system arbutin-, cellobiose-, and salicin-specific EIIBC component (ascF) from Escherichia coli (strain K12).